Reading from the N-terminus, the 207-residue chain is Large ribosomal subunit protein uL4 (207 aa).

Positions 44-81 (KRQGTQSAKTRSEVRGGGRKPWRQKGTGRARQGSIRSP) are disordered. Positions 60 to 71 (GGRKPWRQKGTG) are enriched in basic residues.

It belongs to the universal ribosomal protein uL4 family. Part of the 50S ribosomal subunit.

One of the primary rRNA binding proteins, this protein initially binds near the 5'-end of the 23S rRNA. It is important during the early stages of 50S assembly. It makes multiple contacts with different domains of the 23S rRNA in the assembled 50S subunit and ribosome. Functionally, forms part of the polypeptide exit tunnel. This is Large ribosomal subunit protein uL4 from Finegoldia magna (strain ATCC 29328 / DSM 20472 / WAL 2508) (Peptostreptococcus magnus).